Here is a 422-residue protein sequence, read N- to C-terminus: MEKTEKIQADMQALGRAARAAARIVAKADTAVKNHALIAMARAIRCHEASLLAANAADVAQARNKGLEPAMIDRLTLTPKGIASMAAGLEQIAALSDPIGAVTDLDYRPSGIQVGRMRVPLGVIAIIYEARPNVTADAAGLCLKAGNAAILRGGSEAIQSNQAIAACVQEGLRSAGLPEHAVQVVETTDRAAVGELITMSEYVDMVVPRGGKGLIERIANEARVPVIKHLDGVCHVYVDLSADLEKAVRVADNAKTQRYGTCNTMETLLVHAGIAERFLPRICKILLEKGVELRGDEAARALVAGIKPAVEEDWYAEYLAPVLSVRIVEDIDQAITHIATYGSQHTDAIVTEDYSRARQFLREVDSSSVMINASTRFADGFEYGLGAEIGISTDKLHARGPVGLEGLTSQKFIVLGDGHIRE.

This sequence belongs to the gamma-glutamyl phosphate reductase family.

The protein localises to the cytoplasm. It catalyses the reaction L-glutamate 5-semialdehyde + phosphate + NADP(+) = L-glutamyl 5-phosphate + NADPH + H(+). Its pathway is amino-acid biosynthesis; L-proline biosynthesis; L-glutamate 5-semialdehyde from L-glutamate: step 2/2. Functionally, catalyzes the NADPH-dependent reduction of L-glutamate 5-phosphate into L-glutamate 5-semialdehyde and phosphate. The product spontaneously undergoes cyclization to form 1-pyrroline-5-carboxylate. In Nitrosomonas europaea (strain ATCC 19718 / CIP 103999 / KCTC 2705 / NBRC 14298), this protein is Gamma-glutamyl phosphate reductase.